Consider the following 352-residue polypeptide: Nicotinate-nucleotide--dimethylbenzimidazole phosphoribosyltransferase (352 aa).

Residue glutamate 318 is the Proton acceptor of the active site.

Belongs to the CobT family.

It carries out the reaction 5,6-dimethylbenzimidazole + nicotinate beta-D-ribonucleotide = alpha-ribazole 5'-phosphate + nicotinate + H(+). It functions in the pathway nucleoside biosynthesis; alpha-ribazole biosynthesis; alpha-ribazole from 5,6-dimethylbenzimidazole: step 1/2. Functionally, catalyzes the synthesis of alpha-ribazole-5'-phosphate from nicotinate mononucleotide (NAMN) and 5,6-dimethylbenzimidazole (DMB). The polypeptide is Nicotinate-nucleotide--dimethylbenzimidazole phosphoribosyltransferase (Dehalococcoides mccartyi (strain ATCC BAA-2100 / JCM 16839 / KCTC 5957 / BAV1)).